Consider the following 224-residue polypeptide: Redox-sensing transcriptional repressor Rex (224 aa).

The segment at residues 17 to 56 (RYHRCLEELLKNDIKRISSKELSERMGVTASQIRQDLNNF) is a DNA-binding region (H-T-H motif). Residue 91-96 (GAGNLG) coordinates NAD(+).

The protein belongs to the transcriptional regulatory Rex family. In terms of assembly, homodimer.

It is found in the cytoplasm. Its function is as follows. Modulates transcription in response to changes in cellular NADH/NAD(+) redox state. The chain is Redox-sensing transcriptional repressor Rex from Caldanaerobacter subterraneus subsp. tengcongensis (strain DSM 15242 / JCM 11007 / NBRC 100824 / MB4) (Thermoanaerobacter tengcongensis).